Here is a 430-residue protein sequence, read N- to C-terminus: Tol-Pal system protein TolB (430 aa).

The N-terminal stretch at 1 to 21 (MKQALRVAFGFLILWASVLHA) is a signal peptide.

Belongs to the TolB family. As to quaternary structure, the Tol-Pal system is composed of five core proteins: the inner membrane proteins TolA, TolQ and TolR, the periplasmic protein TolB and the outer membrane protein Pal. They form a network linking the inner and outer membranes and the peptidoglycan layer.

It is found in the periplasm. In terms of biological role, part of the Tol-Pal system, which plays a role in outer membrane invagination during cell division and is important for maintaining outer membrane integrity. TolB occupies a key intermediary position in the Tol-Pal system because it communicates directly with both membrane-embedded components, Pal in the outer membrane and TolA in the inner membrane. The sequence is that of Tol-Pal system protein TolB from Shigella boydii serotype 18 (strain CDC 3083-94 / BS512).